Here is a 455-residue protein sequence, read N- to C-terminus: Glutamyl-tRNA(Gln) amidotransferase subunit A (455 aa).

Catalysis depends on charge relay system residues lysine 74 and serine 149. Serine 173 (acyl-ester intermediate) is an active-site residue.

The protein belongs to the amidase family. GatA subfamily. As to quaternary structure, heterotrimer of A, B and C subunits.

The enzyme catalyses L-glutamyl-tRNA(Gln) + L-glutamine + ATP + H2O = L-glutaminyl-tRNA(Gln) + L-glutamate + ADP + phosphate + H(+). Its function is as follows. Allows the formation of correctly charged Gln-tRNA(Gln) through the transamidation of misacylated Glu-tRNA(Gln) in organisms which lack glutaminyl-tRNA synthetase. The reaction takes place in the presence of glutamine and ATP through an activated gamma-phospho-Glu-tRNA(Gln). The protein is Glutamyl-tRNA(Gln) amidotransferase subunit A of Methanosphaera stadtmanae (strain ATCC 43021 / DSM 3091 / JCM 11832 / MCB-3).